We begin with the raw amino-acid sequence, 505 residues long: Flagellin (505 aa).

It belongs to the bacterial flagellin family.

The protein localises to the secreted. Its subcellular location is the bacterial flagellum. Its function is as follows. Flagellin is the subunit protein which polymerizes to form the filaments of bacterial flagella. The sequence is that of Flagellin (fliC) from Salmonella muenchen.